A 330-amino-acid polypeptide reads, in one-letter code: Tryptophan--tRNA ligase (330 aa).

ATP is bound by residues 6 to 8 and 14 to 15; these read QPT and GN. The short motif at 7 to 15 is the 'HIGH' region element; that stretch reads PTGSLHLGN. Asp130 contacts L-tryptophan. ATP contacts are provided by residues 142–144, Val185, and 194–198; these read GED and KMSKS. Positions 194–198 match the 'KMSKS' region motif; the sequence is KMSKS.

It belongs to the class-I aminoacyl-tRNA synthetase family. In terms of assembly, homodimer.

The protein resides in the cytoplasm. It carries out the reaction tRNA(Trp) + L-tryptophan + ATP = L-tryptophyl-tRNA(Trp) + AMP + diphosphate + H(+). Its function is as follows. Catalyzes the attachment of tryptophan to tRNA(Trp). The polypeptide is Tryptophan--tRNA ligase (Thermosynechococcus vestitus (strain NIES-2133 / IAM M-273 / BP-1)).